A 145-amino-acid polypeptide reads, in one-letter code: D-aminoacyl-tRNA deacylase (145 aa).

The short motif at 137–138 is the Gly-cisPro motif, important for rejection of L-amino acids element; the sequence is GP.

Belongs to the DTD family. As to quaternary structure, homodimer.

Its subcellular location is the cytoplasm. The enzyme catalyses glycyl-tRNA(Ala) + H2O = tRNA(Ala) + glycine + H(+). The catalysed reaction is a D-aminoacyl-tRNA + H2O = a tRNA + a D-alpha-amino acid + H(+). Its function is as follows. An aminoacyl-tRNA editing enzyme that deacylates mischarged D-aminoacyl-tRNAs. Also deacylates mischarged glycyl-tRNA(Ala), protecting cells against glycine mischarging by AlaRS. Acts via tRNA-based rather than protein-based catalysis; rejects L-amino acids rather than detecting D-amino acids in the active site. By recycling D-aminoacyl-tRNA to D-amino acids and free tRNA molecules, this enzyme counteracts the toxicity associated with the formation of D-aminoacyl-tRNA entities in vivo and helps enforce protein L-homochirality. This is D-aminoacyl-tRNA deacylase from Saccharophagus degradans (strain 2-40 / ATCC 43961 / DSM 17024).